We begin with the raw amino-acid sequence, 389 residues long: uncharacterized protein (389 aa).

Disordered regions lie at residues 119–156 (SSLF…GENQ), 180–233 (PTSK…SSMG), 294–321 (SIPS…TSRT), and 362–389 (PEDM…EIKV). Residues 137-155 (SPSTINIEKNRHSSNSGEN) are compositionally biased toward polar residues. Positions 190-204 (DDGDEEDDTDDEGEA) are enriched in acidic residues.

This is an uncharacterized protein from Caenorhabditis elegans.